The chain runs to 156 residues: Egg-lysin (156 aa).

Residues 1-18 form the signal peptide; the sequence is MKLLVLCVFAMMATLAVS.

Monomer. Homodimer. Molecules associate into dimers and then rapidly dissociate again. Interacts (as a monomer) with the egg vitelline layer protein VERL (via VERL repeats); each VERL chain can bind multiple copies of lysin. Sperm.

The protein localises to the cytoplasmic vesicle. It is found in the secretory vesicle. The protein resides in the acrosome lumen. In terms of biological role, creates a 3 um hole in the egg vitelline layer through which the sperm passes. Does not have enzyme activity. Species-specific interaction between the sperm protein lysin and the egg protein VERL exposes a basic surface on lysin that may dissociate the egg vitelline layer via electrostatic repulsion. Plays a role in ensuring species-specific fertilization. The protein is Egg-lysin of Haliotis cracherodii (Black abalone).